The following is a 31-amino-acid chain: Cytochrome b6-f complex subunit 6 (31 aa).

A helical membrane pass occupies residues 4-26; that stretch reads LTSYFGFLLAALTITSALFIGLN.

It belongs to the PetL family. As to quaternary structure, the 4 large subunits of the cytochrome b6-f complex are cytochrome b6, subunit IV (17 kDa polypeptide, PetD), cytochrome f and the Rieske protein, while the 4 small subunits are PetG, PetL, PetM and PetN. The complex functions as a dimer.

It is found in the plastid. Its subcellular location is the chloroplast thylakoid membrane. In terms of biological role, component of the cytochrome b6-f complex, which mediates electron transfer between photosystem II (PSII) and photosystem I (PSI), cyclic electron flow around PSI, and state transitions. PetL is important for photoautotrophic growth as well as for electron transfer efficiency and stability of the cytochrome b6-f complex. The chain is Cytochrome b6-f complex subunit 6 from Blitum bonus-henricus (Good King Henry).